The following is a 1092-amino-acid chain: NAD-specific glutamate dehydrogenase (1092 aa).

Lysine 626 is a catalytic residue.

It belongs to the Glu/Leu/Phe/Val dehydrogenases family. As to quaternary structure, homotetramer. Interacts with NNK1. Post-translationally, phosphorylated by a complex containing the NNK1 kinase.

It carries out the reaction L-glutamate + NAD(+) + H2O = 2-oxoglutarate + NH4(+) + NADH + H(+). Its function is as follows. NAD(+)-dependent glutamate dehydrogenase which degrades glutamate to ammonia and alpha-ketoglutarate. The chain is NAD-specific glutamate dehydrogenase (GDH2) from Saccharomyces cerevisiae (strain ATCC 204508 / S288c) (Baker's yeast).